Consider the following 375-residue polypeptide: Pectate lyase B (375 aa).

The signal sequence occupies residues 1–22; that stretch reads MKSLITPIAAGLLLAFSQYSLA. The cysteines at positions 93 and 176 are disulfide-linked. Residues D150, D152, E187, and D191 each coordinate Ca(2+). R240 is an active-site residue. A disulfide bridge connects residues C351 and C374.

This sequence belongs to the polysaccharide lyase 1 family. PLADES subfamily. Ca(2+) is required as a cofactor.

The protein resides in the secreted. It catalyses the reaction Eliminative cleavage of (1-&gt;4)-alpha-D-galacturonan to give oligosaccharides with 4-deoxy-alpha-D-galact-4-enuronosyl groups at their non-reducing ends.. It functions in the pathway glycan metabolism; pectin degradation; 2-dehydro-3-deoxy-D-gluconate from pectin: step 2/5. Its function is as follows. Involved in maceration and soft-rotting of plant tissue. The polypeptide is Pectate lyase B (pelB) (Dickeya chrysanthemi (Pectobacterium chrysanthemi)).